A 159-amino-acid chain; its full sequence is Photosystem II extrinsic protein U, chloroplastic (159 aa).

It belongs to the PsbU family. As to quaternary structure, PSII is composed of 1 copy each of membrane proteins PsbA, PsbB, PsbC, PsbD, PsbE, PsbF, PsbH, PsbI, PsbJ, PsbK, PsbL, PsbM, PsbT, PsbX, PsbY, PsbZ, Psb30/Ycf12, at least 3 peripheral proteins of the oxygen-evolving complex and a large number of cofactors. It forms dimeric complexes. Part of the oxygen-evolving complex of photosystem II.

It is found in the plastid. Its subcellular location is the chloroplast thylakoid membrane. Functionally, one of the extrinsic, lumenal subunits of photosystem II (PSII). PSII is a light-driven water plastoquinone oxidoreductase, using light energy to abstract electrons from H(2)O, generating a proton gradient subsequently used for ATP formation. The extrinsic proteins stabilize the structure of photosystem II oxygen-evolving complex (OEC), the ion environment of oxygen evolution and protect the OEC against heat-induced inactivation. This Karenia brevis (Red tide dinoflagellate) protein is Photosystem II extrinsic protein U, chloroplastic.